A 297-amino-acid chain; its full sequence is N-acetylmuramic acid 6-phosphate etherase (297 aa).

Residues 56–219 form the SIS domain; sequence AIEAFNKGGR…STISMIGIGK (164 aa). Glu84 serves as the catalytic Proton donor. Residue Glu115 is part of the active site.

It belongs to the GCKR-like family. MurNAc-6-P etherase subfamily. In terms of assembly, homodimer.

The catalysed reaction is N-acetyl-D-muramate 6-phosphate + H2O = N-acetyl-D-glucosamine 6-phosphate + (R)-lactate. The protein operates within amino-sugar metabolism; N-acetylmuramate degradation. Specifically catalyzes the cleavage of the D-lactyl ether substituent of MurNAc 6-phosphate, producing GlcNAc 6-phosphate and D-lactate. This chain is N-acetylmuramic acid 6-phosphate etherase, found in Lactococcus lactis subsp. cremoris (strain SK11).